A 157-amino-acid polypeptide reads, in one-letter code: 2-C-methyl-D-erythritol 2,4-cyclodiphosphate synthase (157 aa).

Residues aspartate 8 and histidine 10 each contribute to the a divalent metal cation site. 4-CDP-2-C-methyl-D-erythritol 2-phosphate contacts are provided by residues 8–10 (DVH) and 34–35 (HS). Residue histidine 42 coordinates a divalent metal cation. 4-CDP-2-C-methyl-D-erythritol 2-phosphate is bound by residues 56 to 58 (DIG), 61 to 65 (FPDTD), 132 to 135 (TTTE), phenylalanine 139, and arginine 142.

Belongs to the IspF family. Homotrimer. A divalent metal cation is required as a cofactor.

It catalyses the reaction 4-CDP-2-C-methyl-D-erythritol 2-phosphate = 2-C-methyl-D-erythritol 2,4-cyclic diphosphate + CMP. Its pathway is isoprenoid biosynthesis; isopentenyl diphosphate biosynthesis via DXP pathway; isopentenyl diphosphate from 1-deoxy-D-xylulose 5-phosphate: step 4/6. Functionally, involved in the biosynthesis of isopentenyl diphosphate (IPP) and dimethylallyl diphosphate (DMAPP), two major building blocks of isoprenoid compounds. Catalyzes the conversion of 4-diphosphocytidyl-2-C-methyl-D-erythritol 2-phosphate (CDP-ME2P) to 2-C-methyl-D-erythritol 2,4-cyclodiphosphate (ME-CPP) with a corresponding release of cytidine 5-monophosphate (CMP). This Geobacter metallireducens (strain ATCC 53774 / DSM 7210 / GS-15) protein is 2-C-methyl-D-erythritol 2,4-cyclodiphosphate synthase.